A 958-amino-acid chain; its full sequence is Probable protein phosphatase DDB_G0282105 (958 aa).

A run of 2 helical transmembrane segments spans residues 2-22 (VLMM…SLMV) and 26-46 (FLEF…ILFF). The stretch at 142-330 (SASQQSELTN…KDKERERSSS (189 aa)) forms a coiled coil. Residues 312 to 328 (QEKEKQKLEKDKERERS) are compositionally biased toward basic and acidic residues. Disordered stretches follow at residues 312-361 (QEKE…PIPI), 380-421 (SVNG…PKFK), 445-475 (HLGS…TTPI), 491-525 (ITSP…ILSP), and 619-659 (NNNN…NDNK). 5 stretches are compositionally biased toward low complexity: residues 329-361 (SSFS…PIPI), 390-401 (SSVSPPSSSYLR), 452-475 (TPAN…TTPI), 491-515 (ITSP…SSSS), and 619-655 (NNNN…NNNK). Residues 613–666 (NFLKTNNNNNKNNIEESNNNNNNNNNNNNNNNNNNNNNNNNNKNDNKEVNSKLE) are a coiled coil. Positions 675-958 (KIGLRRAKKK…DNVTVIIVKL (284 aa)) constitute a PPM-type phosphatase domain. Aspartate 722, glycine 723, aspartate 905, and aspartate 949 together coordinate Mn(2+).

The protein in the C-terminal section; belongs to the PP2C family. The cofactor is Mg(2+). Requires Mn(2+) as cofactor.

The protein localises to the membrane. It carries out the reaction O-phospho-L-seryl-[protein] + H2O = L-seryl-[protein] + phosphate. The enzyme catalyses O-phospho-L-threonyl-[protein] + H2O = L-threonyl-[protein] + phosphate. The polypeptide is Probable protein phosphatase DDB_G0282105 (Dictyostelium discoideum (Social amoeba)).